The sequence spans 1827 residues: Chromodomain-helicase-DNA-binding protein 2 (1827 aa).

Residues 1–14 (MMRNKDKSQEEDSS) are compositionally biased toward basic and acidic residues. The disordered stretch occupies residues 1 to 264 (MMRNKDKSQE…EQQDNSETIE (264 aa)). Residues 15-75 (LHSNASSRSA…SESESAGSKS (61 aa)) are compositionally biased toward low complexity. 3 stretches are compositionally biased toward basic and acidic residues: residues 81–101 (EAKE…KMWE), 115–128 (SRQE…KEEA), and 146–155 (KKQEKWKQDP). Residues 175–204 (GKARRPVPRRTVPKPQVKKQPKIQRGKRKK) show a composition bias toward basic residues. Phosphoserine is present on residues S207 and S208. Over residues 234 to 258 (EDDDFETDSDDLIEMTGEGGDEQQD) the composition is skewed to acidic residues. T240 carries the post-translational modification Phosphothreonine. Phosphoserine is present on S242. Chromo domains are found at residues 261-353 (ETIE…QWLG) and 378-456 (QIVE…IPTR). Residues 496-666 (AHSWCKSNSV…WSLLHFIMPE (171 aa)) enclose the Helicase ATP-binding domain. ATP is bound at residue 509 to 516 (DEMGLGKT). The DEAH box motif lies at 617 to 620 (DEAH). The Helicase C-terminal domain occupies 795–946 (LLDKLLTRLR…HLVIQRMDTT (152 aa)). Disordered stretches follow at residues 1030–1124 (EDEE…RSVR), 1329–1465 (GTVA…DDLD), 1556–1638 (HKKR…ADRG), and 1679–1827 (HMDA…VRKT). Basic and acidic residues predominate over residues 1037–1065 (ERPHKDWDEIIPEEQRKKVEEEERQKELE). A phosphoserine mark is found at S1085, S1087, S1365, and S1386. Basic and acidic residues predominate over residues 1347–1371 (KKENKAPRLKDEHGLEPASPRHSDN). Basic and acidic residues-rich tracts occupy residues 1396 to 1431 (ENKE…KGGD) and 1565 to 1574 (EQKKKDDSLG). Residues 1464–1566 (LDQETFSICK…KKRSQEEEEQ (103 aa)) form a CHD1 helical C-terminal domain (CHCT) region. Positions 1584 to 1601 (SGSSRDSLISQSHTSHNL) are enriched in polar residues. Basic and acidic residues-rich tracts occupy residues 1697–1719 (RPYE…DRHH), 1738–1748 (QDFRRMSDHRP), 1759–1771 (DHYR…KLGE), and 1794–1813 (SPHD…RSLE). S1806 carries the post-translational modification Phosphoserine.

Interacts with MYOD1. Interacts with histone H3.3. In terms of tissue distribution, widely expressed.

It localises to the nucleus. The enzyme catalyses ATP + H2O = ADP + phosphate + H(+). Its function is as follows. ATP-dependent chromatin-remodeling factor that specifically binds to the promoter of target genes, leading to chromatin remodeling, possibly by promoting deposition of histone H3.3. Involved in myogenesis via interaction with MYOD1: binds to myogenic gene regulatory sequences and mediates incorporation of histone H3.3 prior to the onset of myogenic gene expression, promoting their expression. The protein is Chromodomain-helicase-DNA-binding protein 2 (Chd2) of Mus musculus (Mouse).